Here is a 198-residue protein sequence, read N- to C-terminus: Probable host range protein 2 (198 aa).

The segment at 171-198 is disordered; sequence SDDDDDNDNADDDEEDDDEVNDIEDDYE.

This sequence belongs to the poxviridae C7 protein family.

In terms of biological role, plays a role for multiplication of the virus in different cell types. The polypeptide is Probable host range protein 2 (Bos taurus (Bovine)).